The sequence spans 418 residues: Gamma-glutamyl phosphate reductase (418 aa).

It belongs to the gamma-glutamyl phosphate reductase family.

Its subcellular location is the cytoplasm. It catalyses the reaction L-glutamate 5-semialdehyde + phosphate + NADP(+) = L-glutamyl 5-phosphate + NADPH + H(+). It functions in the pathway amino-acid biosynthesis; L-proline biosynthesis; L-glutamate 5-semialdehyde from L-glutamate: step 2/2. Its function is as follows. Catalyzes the NADPH-dependent reduction of L-glutamate 5-phosphate into L-glutamate 5-semialdehyde and phosphate. The product spontaneously undergoes cyclization to form 1-pyrroline-5-carboxylate. This Syntrophotalea carbinolica (strain DSM 2380 / NBRC 103641 / GraBd1) (Pelobacter carbinolicus) protein is Gamma-glutamyl phosphate reductase.